The primary structure comprises 196 residues: Imidazoleglycerol-phosphate dehydratase (196 aa).

It belongs to the imidazoleglycerol-phosphate dehydratase family.

The protein resides in the cytoplasm. It catalyses the reaction D-erythro-1-(imidazol-4-yl)glycerol 3-phosphate = 3-(imidazol-4-yl)-2-oxopropyl phosphate + H2O. The protein operates within amino-acid biosynthesis; L-histidine biosynthesis; L-histidine from 5-phospho-alpha-D-ribose 1-diphosphate: step 6/9. This Oleidesulfovibrio alaskensis (strain ATCC BAA-1058 / DSM 17464 / G20) (Desulfovibrio alaskensis) protein is Imidazoleglycerol-phosphate dehydratase.